The sequence spans 340 residues: 3-isopropylmalate dehydrogenase (340 aa).

Positions 88, 98, 122, and 212 each coordinate substrate. Mg(2+) is bound by residues aspartate 212, aspartate 236, and aspartate 240. Position 272-284 (272-284 (GSAPDIAGQGIAD)) interacts with NAD(+).

It belongs to the isocitrate and isopropylmalate dehydrogenases family. LeuB type 2 subfamily. As to quaternary structure, homodimer. Mg(2+) serves as cofactor. Mn(2+) is required as a cofactor.

It localises to the cytoplasm. The catalysed reaction is (2R,3S)-3-isopropylmalate + NAD(+) = 4-methyl-2-oxopentanoate + CO2 + NADH. It functions in the pathway amino-acid biosynthesis; L-leucine biosynthesis; L-leucine from 3-methyl-2-oxobutanoate: step 3/4. Catalyzes the oxidation of 3-carboxy-2-hydroxy-4-methylpentanoate (3-isopropylmalate) to 3-carboxy-4-methyl-2-oxopentanoate. The product decarboxylates to 4-methyl-2 oxopentanoate. The protein is 3-isopropylmalate dehydrogenase of Corynebacterium glutamicum (strain R).